The primary structure comprises 475 residues: Aspartyl/glutamyl-tRNA(Asn/Gln) amidotransferase subunit B (475 aa).

It belongs to the GatB/GatE family. GatB subfamily. In terms of assembly, heterotrimer of A, B and C subunits.

It catalyses the reaction L-glutamyl-tRNA(Gln) + L-glutamine + ATP + H2O = L-glutaminyl-tRNA(Gln) + L-glutamate + ADP + phosphate + H(+). It carries out the reaction L-aspartyl-tRNA(Asn) + L-glutamine + ATP + H2O = L-asparaginyl-tRNA(Asn) + L-glutamate + ADP + phosphate + 2 H(+). Its function is as follows. Allows the formation of correctly charged Asn-tRNA(Asn) or Gln-tRNA(Gln) through the transamidation of misacylated Asp-tRNA(Asn) or Glu-tRNA(Gln) in organisms which lack either or both of asparaginyl-tRNA or glutaminyl-tRNA synthetases. The reaction takes place in the presence of glutamine and ATP through an activated phospho-Asp-tRNA(Asn) or phospho-Glu-tRNA(Gln). The polypeptide is Aspartyl/glutamyl-tRNA(Asn/Gln) amidotransferase subunit B (Staphylococcus epidermidis (strain ATCC 12228 / FDA PCI 1200)).